A 401-amino-acid polypeptide reads, in one-letter code: Nicotinate phosphoribosyltransferase (401 aa).

Residue H221 is modified to Phosphohistidine; by autocatalysis.

The protein belongs to the NAPRTase family. Transiently phosphorylated on a His residue during the reaction cycle. Phosphorylation strongly increases the affinity for substrates and increases the rate of nicotinate D-ribonucleotide production. Dephosphorylation regenerates the low-affinity form of the enzyme, leading to product release.

It catalyses the reaction nicotinate + 5-phospho-alpha-D-ribose 1-diphosphate + ATP + H2O = nicotinate beta-D-ribonucleotide + ADP + phosphate + diphosphate. Its pathway is cofactor biosynthesis; NAD(+) biosynthesis; nicotinate D-ribonucleotide from nicotinate: step 1/1. Catalyzes the synthesis of beta-nicotinate D-ribonucleotide from nicotinate and 5-phospho-D-ribose 1-phosphate at the expense of ATP. The sequence is that of Nicotinate phosphoribosyltransferase from Pectobacterium atrosepticum (strain SCRI 1043 / ATCC BAA-672) (Erwinia carotovora subsp. atroseptica).